Consider the following 206-residue polypeptide: Large ribosomal subunit protein uL4 (206 aa).

The segment at 49-76 is disordered; it reads QSAKTRTEVRGGGIKPWRQKGTGRARQG.

It belongs to the universal ribosomal protein uL4 family. Part of the 50S ribosomal subunit.

Its function is as follows. One of the primary rRNA binding proteins, this protein initially binds near the 5'-end of the 23S rRNA. It is important during the early stages of 50S assembly. It makes multiple contacts with different domains of the 23S rRNA in the assembled 50S subunit and ribosome. In terms of biological role, forms part of the polypeptide exit tunnel. The chain is Large ribosomal subunit protein uL4 from Clostridium botulinum (strain Alaska E43 / Type E3).